A 97-amino-acid polypeptide reads, in one-letter code: Large ribosomal subunit protein bL28 (97 aa).

Belongs to the bacterial ribosomal protein bL28 family.

The sequence is that of Large ribosomal subunit protein bL28 from Rickettsia africae (strain ESF-5).